The following is a 179-amino-acid chain: MSRIGKQPIPIPSGVEVKIGNDVVEVKGPKGALTTPVCSVLSYEVTDGKVVITRLDETRQTRAQHGLRRTLLANCIEGVSKGFSKTLEVVGVGYKVAVKGDVVDLSVGYSHPVLIDLPAGISAKAEGNKLTISGVDKELVGEVAAQMRRVRKPEPYKGKGIKYDNEQIRRKAGKSGGKK.

Residues 151-179 (RKPEPYKGKGIKYDNEQIRRKAGKSGGKK) are disordered. Residues 152-169 (KPEPYKGKGIKYDNEQIR) show a composition bias toward basic and acidic residues. Positions 170–179 (RKAGKSGGKK) are enriched in basic residues.

Belongs to the universal ribosomal protein uL6 family. As to quaternary structure, part of the 50S ribosomal subunit.

Its function is as follows. This protein binds to the 23S rRNA, and is important in its secondary structure. It is located near the subunit interface in the base of the L7/L12 stalk, and near the tRNA binding site of the peptidyltransferase center. In Nitratidesulfovibrio vulgaris (strain ATCC 29579 / DSM 644 / CCUG 34227 / NCIMB 8303 / VKM B-1760 / Hildenborough) (Desulfovibrio vulgaris), this protein is Large ribosomal subunit protein uL6.